We begin with the raw amino-acid sequence, 257 residues long: Zinc transporter ZupT (257 aa).

The next 5 membrane-spanning stretches (helical) occupy residues 5–25 (LILT…AVLG), 32–52 (VLAF…LMEM), 61–81 (GMSP…YFGL), 109–129 (AILL…ATFV), and 137–157 (LGMG…LAVA). Residues Asn120 and Glu123 each contribute to the Fe(2+) site. The Zn(2+) site is built by Glu123 and His148. Residues Asn149, Glu152, and Glu181 each coordinate Fe(2+). Residue Glu152 participates in Zn(2+) binding. A run of 3 helical transmembrane segments spans residues 182-202 (ILGG…VVMA), 203-223 (AVMA…LMPL), and 236-256 (GVLC…TAGI).

It belongs to the ZIP transporter (TC 2.A.5) family. ZupT subfamily.

The protein localises to the cell inner membrane. The catalysed reaction is Zn(2+)(in) = Zn(2+)(out). Functionally, mediates zinc uptake. May also transport other divalent cations. This Escherichia fergusonii (strain ATCC 35469 / DSM 13698 / CCUG 18766 / IAM 14443 / JCM 21226 / LMG 7866 / NBRC 102419 / NCTC 12128 / CDC 0568-73) protein is Zinc transporter ZupT.